Reading from the N-terminus, the 138-residue chain is Transcription antitermination protein NusB (138 aa).

This sequence belongs to the NusB family.

Involved in transcription antitermination. Required for transcription of ribosomal RNA (rRNA) genes. Binds specifically to the boxA antiterminator sequence of the ribosomal RNA (rrn) operons. The chain is Transcription antitermination protein NusB from Yersinia enterocolitica serotype O:8 / biotype 1B (strain NCTC 13174 / 8081).